The sequence spans 413 residues: Tyrosine--tRNA ligase (413 aa).

The 'HIGH' region signature appears at 59–68 (PTAPDIHLGH). The 'KMSKS' region signature appears at 243-247 (KMSKS). Lys-246 is an ATP binding site. One can recognise an S4 RNA-binding domain in the interval 351–411 (LAIGQLLKQA…GKRRFARVTL (61 aa)).

This sequence belongs to the class-I aminoacyl-tRNA synthetase family. TyrS type 2 subfamily. As to quaternary structure, homodimer.

It is found in the cytoplasm. The catalysed reaction is tRNA(Tyr) + L-tyrosine + ATP = L-tyrosyl-tRNA(Tyr) + AMP + diphosphate + H(+). In terms of biological role, catalyzes the attachment of tyrosine to tRNA(Tyr) in a two-step reaction: tyrosine is first activated by ATP to form Tyr-AMP and then transferred to the acceptor end of tRNA(Tyr). The sequence is that of Tyrosine--tRNA ligase from Burkholderia pseudomallei (strain 1710b).